Consider the following 487-residue polypeptide: 3-ketoacyl-CoA synthase 17 (487 aa).

The next 2 helical transmembrane spans lie at 23 to 43 (LITHFFKLMFLPLMAVLFMNV) and 57 to 77 (STGFIFVITLAIVGSIVFFMS). Positions 74-363 (FFMSRPRSIY…FFATFVAKRL (290 aa)) constitute an FAE domain. Catalysis depends on residues cysteine 218, histidine 297, histidine 382, histidine 386, histidine 415, and asparagine 419.

This sequence belongs to the thiolase-like superfamily. Chalcone/stilbene synthases family. As to expression, expressed in flowers.

It is found in the membrane. It catalyses the reaction a very-long-chain acyl-CoA + malonyl-CoA + H(+) = a very-long-chain 3-oxoacyl-CoA + CO2 + CoA. It functions in the pathway lipid metabolism; fatty acid biosynthesis. With respect to regulation, inhibited by K3 herbicides such as alachlor, allidochlor, anilofos, cafenstrole, fentrazamide and flufenacet. Strongly inhibited by metazachlor. Functionally, active on saturated acyl-CoAs up to C22. Mediates the synthesis of VLCFAs from 20 to 26 carbons in length (e.g. C20:1, C20, C24, C26). The polypeptide is 3-ketoacyl-CoA synthase 17 (Arabidopsis thaliana (Mouse-ear cress)).